A 191-amino-acid polypeptide reads, in one-letter code: Probable ribosome biogenesis protein RLP24 (191 aa).

Phosphoserine is present on Ser-136.

Belongs to the eukaryotic ribosomal protein eL24 family. As to quaternary structure, associated with nucleolar and cytoplasmic pre-60S particles. At the end of biogenesis it dissociates from cytoplasmic pre-60S particles and is likely to be exchanged for its ribosomal homologue, RPL24.

The protein resides in the nucleus. It is found in the nucleolus. Involved in the biogenesis of the 60S ribosomal subunit. Ensures the docking of NOG1 to pre-60S particles. The chain is Probable ribosome biogenesis protein RLP24 (RpL24-like) from Drosophila melanogaster (Fruit fly).